Consider the following 117-residue polypeptide: Dolichyl-diphosphooligosaccharide--protein glycosyltransferase subunit DAD1 (117 aa).

The Cytoplasmic portion of the chain corresponds to methionine 1–aspartate 33. The chain crosses the membrane as a helical span at residues leucine 34–glycine 54. At proline 55 to proline 57 the chain is on the lumenal side. The helical transmembrane segment at phenylalanine 58–leucine 78 threads the bilayer. At arginine 79–arginine 96 the chain is on the cytoplasmic side. A helical membrane pass occupies residues alanine 97–glycine 117.

It belongs to the DAD/OST2 family. As to quaternary structure, component of the oligosaccharyltransferase (OST) complex.

The protein localises to the endoplasmic reticulum membrane. The protein operates within protein modification; protein glycosylation. Its function is as follows. Subunit of the oligosaccharyl transferase (OST) complex that catalyzes the initial transfer of a defined glycan (Glc(3)Man(9)GlcNAc(2) in eukaryotes) from the lipid carrier dolichol-pyrophosphate to an asparagine residue within an Asn-X-Ser/Thr consensus motif in nascent polypeptide chains, the first step in protein N-glycosylation. N-glycosylation occurs cotranslationally and the complex associates with the Sec61 complex at the channel-forming translocon complex that mediates protein translocation across the endoplasmic reticulum (ER). All subunits are required for a maximal enzyme activity. The polypeptide is Dolichyl-diphosphooligosaccharide--protein glycosyltransferase subunit DAD1 (DAD1) (Pisum sativum (Garden pea)).